A 176-amino-acid chain; its full sequence is Outer membrane protein assembly factor BamE (176 aa).

Residues 1 to 21 (MQNAKLMLTCLAFAGLAALAG) form the signal peptide. Cys22 carries the N-palmitoyl cysteine lipid modification. Cys22 carries S-diacylglycerol cysteine lipidation. A disordered region spans residues 121–176 (KEGSTTVTQPADQQKPEAQKEEPPKPGSTLEQLQREVDEAQPVPVPTPEPLDPSPQ). Polar residues predominate over residues 123–132 (GSTTVTQPAD). Residues 134 to 144 (QKPEAQKEEPP) are compositionally biased toward basic and acidic residues. Over residues 163 to 176 (VPVPTPEPLDPSPQ) the composition is skewed to pro residues.

The protein belongs to the BamE family. In terms of assembly, part of the Bam complex.

Its subcellular location is the cell outer membrane. Functionally, part of the outer membrane protein assembly complex, which is involved in assembly and insertion of beta-barrel proteins into the outer membrane. May have a structural role in maintaining the cell envelope integrity. The sequence is that of Outer membrane protein assembly factor BamE from Pseudomonas aeruginosa (strain ATCC 15692 / DSM 22644 / CIP 104116 / JCM 14847 / LMG 12228 / 1C / PRS 101 / PAO1).